A 2334-amino-acid polypeptide reads, in one-letter code: Centriolin (2334 aa).

The segment at 1–70 is disordered; sequence MKKGSERRLS…ESTVPLEPQQ (70 aa). The span at 21–38 shows a compositional bias: low complexity; that stretch reads PGPSSLRSSMRSRSLSPL. 4 LRR repeats span residues 126-147, 148-169, 170-191, and 194-215; these read KLEVLNLSYNLIVKIEKVDKLL, RLRELNLSYNKISKIEGLENMC, NLQKLNLAGNEIEHIPVWFAKK, and SLRVLNLKGNKISSLQDVSKLK. In terms of domain architecture, LRRCT spans 228 to 266; the sequence is NPVVALPHYLQFIIFHLRSLESLEGQPVTTQDRQEAFER. Coiled coils occupy residues 265–343 and 437–800; these read ERFS…VELT and DLQL…LNHV. Disordered stretches follow at residues 542-562 and 751-771; these read DSLDPKDPKHSHMKAQKRGKE and SLRDALGKAQSSEEKQQENNE. S832 bears the Phosphoserine mark. The stretch at 858–1102 forms a coiled coil; the sequence is EKEEAQVRER…ITRLRDVLNL (245 aa). Disordered stretches follow at residues 1154-1198, 1213-1245, and 1338-1360; these read SKVS…PLPA, KSFSKREDADSGGDSQEESGLDDQEEPPFVPPP, and LKSKQREERRQKASTQHSEEEVD. Residues 1227–1238 are compositionally biased toward acidic residues; sequence SQEESGLDDQEE. Residues 1320–2169 adopt a coiled-coil conformation; sequence EHHNLENEVS…MRTLKSEVKD (850 aa). S1478 is subject to Phosphoserine. Positions 1951–2121 are required for centrosome localization; it reads MMFQKLQKER…ELVAQDNHER (171 aa). The tract at residues 1988-2334 is sufficient for interaction with HOOK2; it reads QKSRLKQLLT…PLEEPNSYRH (347 aa). Over residues 2291 to 2307 the composition is skewed to low complexity; sequence TSTSTDSASSPSLPSLV. The interval 2291–2334 is disordered; it reads TSTSTDSASSPSLPSLVEDSQHGHSQSSFQVLQVPLEEPNSYRH.

Interacts with HOOK2. Interacts with EXOC6 and SNAPIN. Associates with the exocyst complex. As to expression, highly expressed in liver.

The protein localises to the cytoplasm. It is found in the cytoskeleton. Its subcellular location is the microtubule organizing center. It localises to the centrosome. The protein resides in the midbody. The protein localises to the midbody ring. In terms of biological role, involved in cell cycle progression and cytokinesis. During the late steps of cytokinesis, anchors exocyst and SNARE complexes at the midbody, thereby allowing secretory vesicle-mediated abscission. The chain is Centriolin (Cntrl) from Mus musculus (Mouse).